The chain runs to 383 residues: N-acetyldiaminopimelate deacetylase (383 aa).

The active site involves D72. E131 serves as the catalytic Proton acceptor.

The protein belongs to the peptidase M20A family. N-acetyldiaminopimelate deacetylase subfamily.

The enzyme catalyses N-acetyl-(2S,6S)-2,6-diaminopimelate + H2O = (2S,6S)-2,6-diaminopimelate + acetate. It functions in the pathway amino-acid biosynthesis; L-lysine biosynthesis via DAP pathway; LL-2,6-diaminopimelate from (S)-tetrahydrodipicolinate (acetylase route): step 3/3. Its function is as follows. Catalyzes the conversion of N-acetyl-diaminopimelate to diaminopimelate and acetate. The protein is N-acetyldiaminopimelate deacetylase of Lacticaseibacillus casei (strain BL23) (Lactobacillus casei).